The following is a 185-amino-acid chain: Ribosome-recycling factor (185 aa).

The protein belongs to the RRF family.

The protein localises to the cytoplasm. In terms of biological role, responsible for the release of ribosomes from messenger RNA at the termination of protein biosynthesis. May increase the efficiency of translation by recycling ribosomes from one round of translation to another. This is Ribosome-recycling factor from Arthrobacter sp. (strain FB24).